Reading from the N-terminus, the 265-residue chain is Thiazole synthase (265 aa).

K107 functions as the Schiff-base intermediate with DXP in the catalytic mechanism. 1-deoxy-D-xylulose 5-phosphate contacts are provided by residues G168, A194 to G195, and N216 to T217.

Belongs to the ThiG family. As to quaternary structure, homotetramer. Forms heterodimers with either ThiH or ThiS.

Its subcellular location is the cytoplasm. The catalysed reaction is [ThiS sulfur-carrier protein]-C-terminal-Gly-aminoethanethioate + 2-iminoacetate + 1-deoxy-D-xylulose 5-phosphate = [ThiS sulfur-carrier protein]-C-terminal Gly-Gly + 2-[(2R,5Z)-2-carboxy-4-methylthiazol-5(2H)-ylidene]ethyl phosphate + 2 H2O + H(+). It participates in cofactor biosynthesis; thiamine diphosphate biosynthesis. Catalyzes the rearrangement of 1-deoxy-D-xylulose 5-phosphate (DXP) to produce the thiazole phosphate moiety of thiamine. Sulfur is provided by the thiocarboxylate moiety of the carrier protein ThiS. In vitro, sulfur can be provided by H(2)S. The sequence is that of Thiazole synthase from Pseudomonas paraeruginosa (strain DSM 24068 / PA7) (Pseudomonas aeruginosa (strain PA7)).